We begin with the raw amino-acid sequence, 375 residues long: Alcohol dehydrogenase class-3 chain L (375 aa).

Residue A1 is modified to N-acetylalanine. Residues C46, H68, C98, C101, C104, C112, and C175 each coordinate Zn(2+).

It belongs to the zinc-containing alcohol dehydrogenase family. Class-III subfamily. As to quaternary structure, homodimer or heterodimer with H chain. It depends on Zn(2+) as a cofactor.

The protein resides in the cytoplasm. The catalysed reaction is a primary alcohol + NAD(+) = an aldehyde + NADH + H(+). The enzyme catalyses a secondary alcohol + NAD(+) = a ketone + NADH + H(+). It catalyses the reaction S-(hydroxymethyl)glutathione + NADP(+) = S-formylglutathione + NADPH + H(+). It carries out the reaction S-(hydroxymethyl)glutathione + NAD(+) = S-formylglutathione + NADH + H(+). Functionally, class-III ADH is remarkably ineffective in oxidizing ethanol, but it readily catalyzes the oxidation of long-chain primary alcohols and the oxidation of S-(hydroxymethyl) glutathione. The protein is Alcohol dehydrogenase class-3 chain L of Gadus morhua (Atlantic cod).